Here is a 437-residue protein sequence, read N- to C-terminus: Trigger factor (437 aa).

The region spanning Gly161–Pro246 is the PPIase FKBP-type domain.

The protein belongs to the FKBP-type PPIase family. Tig subfamily.

Its subcellular location is the cytoplasm. It catalyses the reaction [protein]-peptidylproline (omega=180) = [protein]-peptidylproline (omega=0). Involved in protein export. Acts as a chaperone by maintaining the newly synthesized protein in an open conformation. Functions as a peptidyl-prolyl cis-trans isomerase. This chain is Trigger factor, found in Cellvibrio japonicus (strain Ueda107) (Pseudomonas fluorescens subsp. cellulosa).